A 109-amino-acid polypeptide reads, in one-letter code: uncharacterized protein (109 aa).

This is an uncharacterized protein from Methanocaldococcus jannaschii (strain ATCC 43067 / DSM 2661 / JAL-1 / JCM 10045 / NBRC 100440) (Methanococcus jannaschii).